A 204-amino-acid polypeptide reads, in one-letter code: MAAASPSVFLLMITGQVESAQFPEYDDLYCKYCFVYGQDWAPTAGLEEGISQIASKSQDVRQALVWNFPIDVTFKSTNPYGWPQIVLSVYGPDVFGNDVVRGYGAVHVPLSPGRHKRTIPMFVPESTSTLQKFTSWFMGRRPEYTDPKVVAQGEGREVTRVRSQGFVTLLFNVVTKDMKKLGYDTGPVDTQGVLGPSLPQGNPQ.

The C2 B9-type domain maps to Phe-9 to Thr-127.

The protein belongs to the B9D family. As to quaternary structure, part of the tectonic-like complex (also named B9 complex).

The protein localises to the cytoplasm. It localises to the cytoskeleton. It is found in the cilium basal body. Its function is as follows. Component of the tectonic-like complex, a complex localized at the transition zone of primary cilia and acting as a barrier that prevents diffusion of transmembrane proteins between the cilia and plasma membranes. Required for ciliogenesis and sonic hedgehog/SHH signaling. This Mus musculus (Mouse) protein is B9 domain-containing protein 1 (B9d1).